Consider the following 418-residue polypeptide: Homocitrate synthase, mitochondrial (418 aa).

Residues 1–10 (MSVSEANGTE) are compositionally biased toward polar residues. A disordered region spans residues 1 to 25 (MSVSEANGTETIKPPMNGNPYGPNP). The segment covering 14–25 (PPMNGNPYGPNP) has biased composition (low complexity). Residues 35–288 (FSIIESTLRE…THKYKLNQLR (254 aa)) enclose the Pyruvate carboxyltransferase domain. Residues R43, E44, and H103 each contribute to the 2-oxoglutarate site. Residue E44 participates in L-lysine binding. E44 contributes to the Zn(2+) binding site. D123 serves as a coordination point for L-lysine. 2-oxoglutarate is bound by residues R163, S165, T197, H224, and H226. Residue T197 participates in L-lysine binding. Zn(2+) contacts are provided by H224 and H226. Residue H321 is the Proton acceptor of the active site.

This sequence belongs to the alpha-IPM synthase/homocitrate synthase family. Homocitrate synthase LYS20/LYS21 subfamily. It depends on Mg(2+) as a cofactor. Mn(2+) is required as a cofactor. Zn(2+) serves as cofactor. The cofactor is Co(2+).

It is found in the mitochondrion. It catalyses the reaction acetyl-CoA + 2-oxoglutarate + H2O = (2R)-homocitrate + CoA + H(+). It participates in amino-acid biosynthesis; L-lysine biosynthesis via AAA pathway; L-alpha-aminoadipate from 2-oxoglutarate: step 1/5. Its activity is regulated as follows. The activity is controled by feedback inhibition by L-lysine, the final product of the pathway that acts as a competitive inhibitor of 2-oxoglutarate. Its function is as follows. Catalyzes the aldol-type condensation of 2-oxoglutarate with acetyl-CoA to yield homocitrate, the first step of the alpha-aminoadipate (AAA) lysine biosynthesis pathway. This chain is Homocitrate synthase, mitochondrial, found in Schizosaccharomyces pombe (strain 972 / ATCC 24843) (Fission yeast).